A 262-amino-acid polypeptide reads, in one-letter code: tRNA pseudouridine synthase A (262 aa).

The active-site Nucleophile is Asp51. Position 109 (Tyr109) interacts with substrate.

Belongs to the tRNA pseudouridine synthase TruA family. In terms of assembly, homodimer.

It catalyses the reaction uridine(38/39/40) in tRNA = pseudouridine(38/39/40) in tRNA. Its function is as follows. Formation of pseudouridine at positions 38, 39 and 40 in the anticodon stem and loop of transfer RNAs. The chain is tRNA pseudouridine synthase A from Legionella pneumophila (strain Lens).